The following is a 524-amino-acid chain: Alkaline phosphatase, tissue-nonspecific isozyme (524 aa).

The first 17 residues, 1-17 (MISPFLLLAIGTCFASS), serve as a signal peptide directing secretion. Aspartate 60 is a Mg(2+) binding site. Positions 60 and 110 each coordinate Zn(2+). Serine 110 functions as the Phosphoserine intermediate in the catalytic mechanism. Residue serine 110 is modified to Phosphoserine. Cysteine 139 and cysteine 201 form a disulfide bridge. The N-linked (GlcNAc...) asparagine glycan is linked to asparagine 140. Threonine 173 is a binding site for Mg(2+). Asparagine 230 carries an N-linked (GlcNAc...) asparagine glycan. A Ca(2+)-binding site is contributed by glutamate 235. N-linked (GlcNAc...) asparagine glycosylation is present at asparagine 271. The Ca(2+) site is built by phenylalanine 290 and glutamate 291. N-linked (GlcNAc...) asparagine glycosylation is present at asparagine 303. Ca(2+) is bound at residue aspartate 306. Glutamate 332 is a binding site for Mg(2+). The Zn(2+) site is built by aspartate 337, histidine 341, aspartate 378, and histidine 379. Asparagine 430 is a glycosylation site (N-linked (GlcNAc...) asparagine). Histidine 454 contacts Zn(2+). Residues cysteine 489 and cysteine 497 are joined by a disulfide bond. Residue serine 499 is the site of GPI-anchor amidated serine attachment. Residues 500 to 524 (ASSSGSPSPGPLLLLLALLPLGSLF) constitute a propeptide, removed in mature form.

Belongs to the alkaline phosphatase family. Homodimer. Mg(2+) is required as a cofactor. It depends on Zn(2+) as a cofactor. The cofactor is Ca(2+). In terms of processing, N-glycosylated.

The protein localises to the cell membrane. It is found in the extracellular vesicle membrane. Its subcellular location is the mitochondrion membrane. The protein resides in the mitochondrion intermembrane space. The enzyme catalyses a phosphate monoester + H2O = an alcohol + phosphate. It carries out the reaction diphosphate + H2O = 2 phosphate + H(+). It catalyses the reaction pyridoxal 5'-phosphate + H2O = pyridoxal + phosphate. The catalysed reaction is phosphoethanolamine + H2O = ethanolamine + phosphate. The enzyme catalyses N-phosphocreatine + H2O = creatine + phosphate. It carries out the reaction ATP + H2O = ADP + phosphate + H(+). It catalyses the reaction ADP + H2O = AMP + phosphate + H(+). The catalysed reaction is AMP + H2O = adenosine + phosphate. Phosphatase activity is specifically inhibited by 5-((5-chloro-2-methoxyphenyl)sulfonamido)nicotinamide (SBI-425). In terms of biological role, alkaline phosphatase that metabolizes various phosphate compounds and plays a key role in skeletal mineralization and adaptive thermogenesis. Has broad substrate specificity and can hydrolyze a considerable variety of compounds: however, only a few substrates, such as diphosphate (inorganic pyrophosphate; PPi), pyridoxal 5'-phosphate (PLP) and N-phosphocreatine are natural substrates. Plays an essential role in skeletal and dental mineralization via its ability to hydrolyze extracellular diphosphate, a potent mineralization inhibitor, to phosphate: it thereby promotes hydroxyapatite crystal formation and increases inorganic phosphate concentration. Acts in a non-redundant manner with PHOSPHO1 in skeletal mineralization: while PHOSPHO1 mediates the initiation of hydroxyapatite crystallization in the matrix vesicles (MVs), ALPL/TNAP catalyzes the spread of hydroxyapatite crystallization in the extracellular matrix. Also promotes dephosphorylation of osteopontin (SSP1), an inhibitor of hydroxyapatite crystallization in its phosphorylated state; it is however unclear whether ALPL/TNAP mediates SSP1 dephosphorylation via a direct or indirect manner. Catalyzes dephosphorylation of PLP to pyridoxal (PL), the transportable form of vitamin B6, in order to provide a sufficient amount of PLP in the brain, an essential cofactor for enzymes catalyzing the synthesis of diverse neurotransmitters. Additionally, also able to mediate ATP degradation in a stepwise manner to adenosine, thereby regulating the availability of ligands for purinergic receptors. Also capable of dephosphorylating microbial products, such as lipopolysaccharides (LPS) as well as other phosphorylated small-molecules, such as poly-inosine:cytosine (poly I:C). Acts as a key regulator of adaptive thermogenesis as part of the futile creatine cycle: localizes to the mitochondria of thermogenic fat cells and acts by mediating hydrolysis of N-phosphocreatine to initiate a futile cycle of creatine dephosphorylation and phosphorylation. During the futile creatine cycle, creatine and N-phosphocreatine are in a futile cycle, which dissipates the high energy charge of N-phosphocreatine as heat without performing any mechanical or chemical work. The sequence is that of Alkaline phosphatase, tissue-nonspecific isozyme (ALPL) from Bos taurus (Bovine).